Consider the following 126-residue polypeptide: Large ribosomal subunit protein bL17 (126 aa).

It belongs to the bacterial ribosomal protein bL17 family. As to quaternary structure, part of the 50S ribosomal subunit. Contacts protein L32.

This chain is Large ribosomal subunit protein bL17, found in Aliivibrio salmonicida (strain LFI1238) (Vibrio salmonicida (strain LFI1238)).